A 259-amino-acid polypeptide reads, in one-letter code: Proteasome subunit alpha (259 aa).

The interval arginine 222–aspartate 259 is disordered. Basic and acidic residues predominate over residues proline 244–aspartate 259.

Belongs to the peptidase T1A family. As to quaternary structure, the 20S proteasome core is composed of 14 alpha and 14 beta subunits that assemble into four stacked heptameric rings, resulting in a barrel-shaped structure. The two inner rings, each composed of seven catalytic beta subunits, are sandwiched by two outer rings, each composed of seven alpha subunits. The catalytic chamber with the active sites is on the inside of the barrel. Has a gated structure, the ends of the cylinder being occluded by the N-termini of the alpha-subunits. Is capped by the proteasome-associated ATPase, ARC.

The protein resides in the cytoplasm. It participates in protein degradation; proteasomal Pup-dependent pathway. With respect to regulation, the formation of the proteasomal ATPase ARC-20S proteasome complex, likely via the docking of the C-termini of ARC into the intersubunit pockets in the alpha-rings, may trigger opening of the gate for substrate entry. Interconversion between the open-gate and close-gate conformations leads to a dynamic regulation of the 20S proteasome proteolysis activity. Functionally, component of the proteasome core, a large protease complex with broad specificity involved in protein degradation. This chain is Proteasome subunit alpha, found in Rhodococcus jostii (strain RHA1).